The primary structure comprises 1379 residues: Attractin-like protein 1 (1379 aa).

A disordered region spans residues M1–R23. Residues M1–A52 form the signal peptide. An EGF-like 1 domain is found at L53 to Q91. Topologically, residues L53–L1230 are extracellular. Cystine bridges form between C63-C79, C81-C90, and C93-C119. An N-linked (GlcNAc...) asparagine glycan is attached at N76. The region spanning C93–N209 is the CUB domain. 2 N-linked (GlcNAc...) asparagine glycosylation sites follow: N174 and N198. Positions S207–D245 constitute an EGF-like 2 domain. Cystine bridges form between C211–C221, C215–C233, and C235–C244. 6 Kelch repeats span residues F316–E365, I367–S415, V427–D475, S480–G531, M533–G591, and S592–N638. The N-linked (GlcNAc...) asparagine glycan is linked to N380. PSI domains lie at N614 to P657, R666 to H709, and I715 to L760. One can recognise a C-type lectin domain in the interval I755–E873. Residues N763, N778, and N898 are each glycosylated (N-linked (GlcNAc...) asparagine). C776 and C872 are disulfide-bonded. PSI domains lie at P889–S939 and N942–P1012. 8 disulfides stabilise this stretch: C1014–C1022, C1016–C1028, C1031–C1040, C1043–C1057, C1060–C1069, C1062–C1076, C1078–C1088, and C1091–C1106. Laminin EGF-like domains lie at C1014–A1059 and C1060–Y1108. N-linked (GlcNAc...) asparagine glycosylation occurs at N1157. The chain crosses the membrane as a helical span at residues V1231–V1251. The Cytoplasmic segment spans residues W1252 to V1379. Positions K1354 to V1379 are disordered.

As to quaternary structure, interacts with MC4R.

Its subcellular location is the membrane. Its function is as follows. May play a role in melanocortin signaling pathways that regulate energy homeostasis. This chain is Attractin-like protein 1 (ATRNL1), found in Homo sapiens (Human).